Reading from the N-terminus, the 133-residue chain is ATP synthase epsilon chain, chloroplastic (133 aa).

This sequence belongs to the ATPase epsilon chain family. F-type ATPases have 2 components, CF(1) - the catalytic core - and CF(0) - the membrane proton channel. CF(1) has five subunits: alpha(3), beta(3), gamma(1), delta(1), epsilon(1). CF(0) has three main subunits: a, b and c.

The protein localises to the plastid. It is found in the chloroplast thylakoid membrane. Produces ATP from ADP in the presence of a proton gradient across the membrane. This Cyanidium caldarium (Red alga) protein is ATP synthase epsilon chain, chloroplastic.